Reading from the N-terminus, the 394-residue chain is Phosphoglycerate kinase (394 aa).

Substrate-binding positions include 21–23 (DFN), Arg36, 59–62 (HLGR), Arg118, and Arg151. Position 183 is a phosphoserine (Ser183). ATP is bound at residue Lys201. Position 299 is a phosphothreonine (Thr299). ATP is bound by residues Asn316, Glu323, and 350-353 (GGDS).

This sequence belongs to the phosphoglycerate kinase family. Monomer.

It is found in the cytoplasm. It catalyses the reaction (2R)-3-phosphoglycerate + ATP = (2R)-3-phospho-glyceroyl phosphate + ADP. It functions in the pathway carbohydrate degradation; glycolysis; pyruvate from D-glyceraldehyde 3-phosphate: step 2/5. The chain is Phosphoglycerate kinase from Geobacillus stearothermophilus (Bacillus stearothermophilus).